The chain runs to 439 residues: Acyl-coenzyme A thioesterase 10, mitochondrial (439 aa).

The transit peptide at 1–21 (MKRAAMRLWTLNKGLLTHGRG) directs the protein to the mitochondrion. HotDog ACOT-type domains follow at residues 85–209 (SYIE…QDSE) and 289–401 (EDTK…EKEV).

It belongs to the acyl coenzyme A hydrolase family.

Its subcellular location is the mitochondrion. Its function is as follows. Catalyzes the hydrolysis of acyl-CoAs into free fatty acids and coenzyme A (CoASH), regulating their respective intracellular levels. Active on long chain acyl-CoAs. The sequence is that of Acyl-coenzyme A thioesterase 10, mitochondrial from Mus musculus (Mouse).